The sequence spans 455 residues: Serine--tRNA ligase (455 aa).

252–254 serves as a coordination point for L-serine; the sequence is TAE. Residues 283-285 and Val-299 contribute to the ATP site; that span reads RKE. Glu-306 is an L-serine binding site. 370-373 is an ATP binding site; it reads EVVS. Position 406 (Thr-406) interacts with L-serine.

It belongs to the class-II aminoacyl-tRNA synthetase family. Type-1 seryl-tRNA synthetase subfamily. Homodimer. The tRNA molecule binds across the dimer.

The protein localises to the cytoplasm. It carries out the reaction tRNA(Ser) + L-serine + ATP = L-seryl-tRNA(Ser) + AMP + diphosphate + H(+). It catalyses the reaction tRNA(Sec) + L-serine + ATP = L-seryl-tRNA(Sec) + AMP + diphosphate + H(+). Its pathway is aminoacyl-tRNA biosynthesis; selenocysteinyl-tRNA(Sec) biosynthesis; L-seryl-tRNA(Sec) from L-serine and tRNA(Sec): step 1/1. In terms of biological role, catalyzes the attachment of serine to tRNA(Ser). Is also able to aminoacylate tRNA(Sec) with serine, to form the misacylated tRNA L-seryl-tRNA(Sec), which will be further converted into selenocysteinyl-tRNA(Sec). The sequence is that of Serine--tRNA ligase from Pyrococcus abyssi (strain GE5 / Orsay).